We begin with the raw amino-acid sequence, 715 residues long: MKELFATTARGFEELLKLELSSLGATECQVAQGGVHFMADDETQYRALLWSRLSSRILLPIVKTKIYSDLDLYSAVVRQNWLAYFDERVRFLVDFNGTNREIRHTQFGAMRVKDGIVDYFERNGKARPNVDKDYPDIRIHAYLNRDDLVLSLDLSGEALHLRGYREDSGAAPLRETLAAAIVLRSGWKQGTPLVDPMCGSGTLLIEAAQMEAKIAPQLHRMHWGFDFWRGHNQAAWEKVKREAVAMAEAEFNKNPNPHFYGFDLDHRVLQKAQRNAQNAGVAHLIKWKQGDVAALKNPTPEDKGTVICNPPYGERLGTTPALIALYSVFGQRLKEQFPGWNASIFSSEQGLLDCLRMRSHRQFKAKNGPLDCIQKNYQISDRTLSPENKSAVENAGEFKPNANVATDFANRLQKNIKKIEKWAKQEGIEAYRLYDADLPDYNLAVDHYGDHIVVQEYAAPKNIDENKARQRLLDAVTATLAVTGVETNKLILKVRQKQKGANQYEKLANKGEYFYVNEYGAKLWVNLTDYLDTGLFLDHRLTRRMVGQMAKGKDFLNLFAYTGSATVHAALGGAKSTTTVDMSNTYLNWAEQNLILNEADGKQHKLIQADCLQWLANCAQQFDLIFVDPPTFSNSKRMEDSWDVQRDHIKLMGNLKRILRPNGTIVFSNNKRGFKMDFEGLTRLGLKAEEISAKTLPLDFERNKQIHNCWIVEFV.

In terms of domain architecture, THUMP spans 43–154; sequence TQYRALLWSR…RDDLVLSLDL (112 aa).

This sequence belongs to the methyltransferase superfamily. RlmKL family.

The protein resides in the cytoplasm. The enzyme catalyses guanosine(2445) in 23S rRNA + S-adenosyl-L-methionine = N(2)-methylguanosine(2445) in 23S rRNA + S-adenosyl-L-homocysteine + H(+). The catalysed reaction is guanosine(2069) in 23S rRNA + S-adenosyl-L-methionine = N(2)-methylguanosine(2069) in 23S rRNA + S-adenosyl-L-homocysteine + H(+). In terms of biological role, specifically methylates the guanine in position 2445 (m2G2445) and the guanine in position 2069 (m7G2069) of 23S rRNA. The protein is Ribosomal RNA large subunit methyltransferase K/L of Mannheimia succiniciproducens (strain KCTC 0769BP / MBEL55E).